Here is a 144-residue protein sequence, read N- to C-terminus: Large ribosomal subunit protein uL11 (144 aa).

It belongs to the universal ribosomal protein uL11 family. As to quaternary structure, part of the ribosomal stalk of the 50S ribosomal subunit. Interacts with L10 and the large rRNA to form the base of the stalk. L10 forms an elongated spine to which L12 dimers bind in a sequential fashion forming a multimeric L10(L12)X complex. In terms of processing, one or more lysine residues are methylated.

Forms part of the ribosomal stalk which helps the ribosome interact with GTP-bound translation factors. The sequence is that of Large ribosomal subunit protein uL11 from Nocardia farcinica (strain IFM 10152).